The sequence spans 105 residues: Large ribosomal subunit protein uL24 (105 aa).

The protein belongs to the universal ribosomal protein uL24 family. In terms of assembly, part of the 50S ribosomal subunit.

One of two assembly initiator proteins, it binds directly to the 5'-end of the 23S rRNA, where it nucleates assembly of the 50S subunit. Its function is as follows. One of the proteins that surrounds the polypeptide exit tunnel on the outside of the subunit. The protein is Large ribosomal subunit protein uL24 of Clostridium novyi (strain NT).